Consider the following 229-residue polypeptide: DNA repair protein RecO (229 aa).

Belongs to the RecO family.

Involved in DNA repair and RecF pathway recombination. In Legionella pneumophila subsp. pneumophila (strain Philadelphia 1 / ATCC 33152 / DSM 7513), this protein is DNA repair protein RecO.